Consider the following 61-residue polypeptide: Large ribosomal subunit protein bL32 (61 aa).

Residues 1-16 (MAVPRRKTSPSRRGMR) are compositionally biased toward basic residues. The disordered stretch occupies residues 1-61 (MAVPRRKTSP…RQVLKAKSDS (61 aa)). The segment covering 27-44 (YAEDKDSGELRRPHHLDL) has biased composition (basic and acidic residues).

It belongs to the bacterial ribosomal protein bL32 family.

The chain is Large ribosomal subunit protein bL32 from Nitrobacter winogradskyi (strain ATCC 25391 / DSM 10237 / CIP 104748 / NCIMB 11846 / Nb-255).